A 111-amino-acid polypeptide reads, in one-letter code: Translation initiation factor 1A (111 aa).

Basic residues predominate over residues 1 to 13 (MKKSNNKNNHKNN). Residues 1–30 (MKKSNNKNNHKNNHNNNQGGENIRVRSPRR) form a disordered region. Positions 23–96 (IRVRSPRRGE…EKADVIWRYT (74 aa)) constitute an S1-like domain.

It belongs to the eIF-1A family.

Functionally, seems to be required for maximal rate of protein biosynthesis. Enhances ribosome dissociation into subunits and stabilizes the binding of the initiator Met-tRNA(I) to 40 S ribosomal subunits. In Methanosphaera stadtmanae (strain ATCC 43021 / DSM 3091 / JCM 11832 / MCB-3), this protein is Translation initiation factor 1A.